A 300-amino-acid chain; its full sequence is MAATIIDGKAFAAKVRAQVAEHVTRIKQDHGITPGLAVVLVGEDPASQVYVRSKGKQTVEAGMNSYEHKLDADTSEADLLAVVDKLNKDPNVHGILVQLPLPKHLDEDLIINSIDPAKDVDGFHISNVGLLGTGQKSMVPCTPLGCLMMLREHHGSLSGMNAVVIGRSNIVGKPMAQLLLNDSCTVTIAHSRTKDLPDVVRGADIVVAAVGRPEMVPGDWIKPGATVIDVGINRIDAPEKGEGKTRLVGDCHYDSCAETAGAITPVPGGVGPMTIACLLANTVTSCCRANGLEEPTGLTA.

NADP(+) is bound by residues 166 to 168, Ser-191, and Ile-232; that span reads GRS.

The protein belongs to the tetrahydrofolate dehydrogenase/cyclohydrolase family. Homodimer.

The catalysed reaction is (6R)-5,10-methylene-5,6,7,8-tetrahydrofolate + NADP(+) = (6R)-5,10-methenyltetrahydrofolate + NADPH. The enzyme catalyses (6R)-5,10-methenyltetrahydrofolate + H2O = (6R)-10-formyltetrahydrofolate + H(+). Its pathway is one-carbon metabolism; tetrahydrofolate interconversion. Catalyzes the oxidation of 5,10-methylenetetrahydrofolate to 5,10-methenyltetrahydrofolate and then the hydrolysis of 5,10-methenyltetrahydrofolate to 10-formyltetrahydrofolate. The polypeptide is Bifunctional protein FolD 2 (Roseobacter denitrificans (strain ATCC 33942 / OCh 114) (Erythrobacter sp. (strain OCh 114))).